We begin with the raw amino-acid sequence, 271 residues long: 2,3,4,5-tetrahydropyridine-2,6-dicarboxylate N-succinyltransferase (271 aa).

Substrate is bound by residues Arg-103 and Asp-140.

This sequence belongs to the transferase hexapeptide repeat family. Homotrimer.

Its subcellular location is the cytoplasm. It catalyses the reaction (S)-2,3,4,5-tetrahydrodipicolinate + succinyl-CoA + H2O = (S)-2-succinylamino-6-oxoheptanedioate + CoA. The protein operates within amino-acid biosynthesis; L-lysine biosynthesis via DAP pathway; LL-2,6-diaminopimelate from (S)-tetrahydrodipicolinate (succinylase route): step 1/3. The protein is 2,3,4,5-tetrahydropyridine-2,6-dicarboxylate N-succinyltransferase of Methylococcus capsulatus (strain ATCC 33009 / NCIMB 11132 / Bath).